A 157-amino-acid polypeptide reads, in one-letter code: Small ribosomal subunit protein bS16 (157 aa).

Positions 125-141 are enriched in basic and acidic residues; that stretch reads KRKAAKKAAEEAAAKEA. A disordered region spans residues 125 to 157; sequence KRKAAKKAAEEAAAKEAEAEEAAEDKAEEESAE. Acidic residues predominate over residues 142-157; the sequence is EAEEAAEDKAEEESAE.

Belongs to the bacterial ribosomal protein bS16 family.

This Corynebacterium kroppenstedtii (strain DSM 44385 / JCM 11950 / CIP 105744 / CCUG 35717) protein is Small ribosomal subunit protein bS16.